The following is a 163-amino-acid chain: uncharacterized protein (163 aa).

This is an uncharacterized protein from Shigella flexneri.